A 155-amino-acid polypeptide reads, in one-letter code: Acetylaranotin biosynthesis cluster protein L (155 aa).

The protein operates within mycotoxin biosynthesis. Functionally, nonribosomal peptide synthetase; part of the gene cluster that mediates the biosynthesis of acetylaranotin, a member of the epipolythiodioxopiperazine (ETP) class of toxins characterized by a disulfide-bridged cyclic dipeptide. The first step of acetylaranotin biosynthesis is performed by the NRPS ataP which produces diketopiperazine cyclo-L-Phe-L-Phe via the condensation of 2 phenylalanines (L-Phe). The ataC domain of ataTC then catalyzes the formation of bishydroxylation of cyclo-L-Phe-L-Phe. The glutathione S-transferase domain ataG in ataIMG further catalyzes the conjugation of two glutathiones to the bishydroxylated intermediate. Next, the dipeptidase ataJ removes the Glu residues. The following step is performed by the carbon sulfur lyase domain ataI of ataIMG which may convert the bis-cysteinyl adduct to yield an epidithiol intermediate. The ataT domain from ataTC then catalyzes the oxidation of the free dithiols, followed by a cyclization step catalyzed by the cytochrome P450 ataF. AtaF probably acts as an epoxidase to promote a dual epoxidation formation at C8 and C9 along with C8' and C9', followed by the spontaneous nucleophilic attack of the amide nitrogens N10 and N10' to yield an intermediate with the pyrrolidine partial structure. The final steps of acetylaranotin biosynthesis involve the acetylation and ring rearrangement of an epitetrathiodiketopiperazine intermediate to produce acetylaranotin. AtaH probably catalyzes the acetylation of epitetrathiodiketopiperazine to produce a diacetate and ataY is responsible for the formation of the dihydrooxepin moiety that converts the diacetate intermediate to acetylaranotin via acetylapoaranotin. Both enzymes could function independently in the absence of the other. The specific function of ataL within the pathway has still to be determined. The acetylaranotin bis-thiomethyltransferase ataS located outside of acetylaranotin gene cluster is the main thiomethyltransferase responsible for converting acetylaranotin and its related intermediates to their methylated forms. The polypeptide is Acetylaranotin biosynthesis cluster protein L (Aspergillus terreus (strain NIH 2624 / FGSC A1156)).